A 528-amino-acid chain; its full sequence is Oxamate amidohydrolase proenzyme (528 aa).

Catalysis depends on threonine 342, which acts as the Nucleophile. 424-425 (GG) provides a ligand contact to substrate.

The protein belongs to the gamma-glutamyltransferase family. As to quaternary structure, heterodimer that consists of a 35.5 kDa large (alpha) subunit and a 20 kDa small (beta) subunit, which are synthesized from a single polypeptide. Post-translationally, cleaved by autocatalysis into a large (alpha) and a small (beta) subunit.

The enzyme catalyses oxamate + H2O = oxalate + NH4(+). Involved in the uric acid degradation pathway. Catalyzes the conversion of oxamate to oxalate. This Klebsiella pneumoniae subsp. pneumoniae (strain ATCC 700721 / MGH 78578) protein is Oxamate amidohydrolase proenzyme.